We begin with the raw amino-acid sequence, 149 residues long: Large ribosomal subunit protein bL9 (149 aa).

This sequence belongs to the bacterial ribosomal protein bL9 family.

In terms of biological role, binds to the 23S rRNA. This Ligilactobacillus salivarius (strain UCC118) (Lactobacillus salivarius) protein is Large ribosomal subunit protein bL9.